The sequence spans 143 residues: Large ribosomal subunit protein uL11 (143 aa).

The protein belongs to the universal ribosomal protein uL11 family. Part of the ribosomal stalk of the 50S ribosomal subunit. Interacts with L10 and the large rRNA to form the base of the stalk. L10 forms an elongated spine to which L12 dimers bind in a sequential fashion forming a multimeric L10(L12)X complex. In terms of processing, one or more lysine residues are methylated.

Its function is as follows. Forms part of the ribosomal stalk which helps the ribosome interact with GTP-bound translation factors. The sequence is that of Large ribosomal subunit protein uL11 from Burkholderia cenocepacia (strain HI2424).